The primary structure comprises 166 residues: Peptide deformylase (166 aa).

2 residues coordinate Fe cation: Cys-88 and His-130. The active site involves Glu-131. His-134 lines the Fe cation pocket.

It belongs to the polypeptide deformylase family. The cofactor is Fe(2+).

The enzyme catalyses N-terminal N-formyl-L-methionyl-[peptide] + H2O = N-terminal L-methionyl-[peptide] + formate. Its function is as follows. Removes the formyl group from the N-terminal Met of newly synthesized proteins. Requires at least a dipeptide for an efficient rate of reaction. N-terminal L-methionine is a prerequisite for activity but the enzyme has broad specificity at other positions. In Caldicellulosiruptor bescii (strain ATCC BAA-1888 / DSM 6725 / KCTC 15123 / Z-1320) (Anaerocellum thermophilum), this protein is Peptide deformylase.